Here is a 152-residue protein sequence, read N- to C-terminus: Ribosome maturation factor RimP (152 aa).

This sequence belongs to the RimP family.

The protein localises to the cytoplasm. In terms of biological role, required for maturation of 30S ribosomal subunits. This chain is Ribosome maturation factor RimP, found in Burkholderia ambifaria (strain MC40-6).